A 47-amino-acid polypeptide reads, in one-letter code: Wound-induced basic protein (47 aa).

The disordered stretch occupies residues 1 to 47 (MIYDVNSPLFRSFLSQKGGSSDKRKTEEQKPKEHRPKASENKPIMTE). Residues 20-40 (SSDKRKTEEQKPKEHRPKASE) show a composition bias toward basic and acidic residues.

In terms of tissue distribution, abundant in radicals and epicotyls of seedlings and higher in the roots than in stems and leaves of mature plants.

The polypeptide is Wound-induced basic protein (PR4) (Phaseolus vulgaris (Kidney bean)).